The following is a 69-amino-acid chain: Large ribosomal subunit protein bL31 (69 aa).

The Zn(2+) site is built by cysteine 16, cysteine 18, cysteine 38, and cysteine 41.

Belongs to the bacterial ribosomal protein bL31 family. Type A subfamily. As to quaternary structure, part of the 50S ribosomal subunit. It depends on Zn(2+) as a cofactor.

In terms of biological role, binds the 23S rRNA. The protein is Large ribosomal subunit protein bL31 of Thermobifida fusca (strain YX).